We begin with the raw amino-acid sequence, 278 residues long: Biotin synthase (278 aa).

In terms of domain architecture, Radical SAM core spans 1 to 227 (MQIMLCAISN…NAHIMVAGGR (227 aa)). Positions 16, 20, and 23 each coordinate [4Fe-4S] cluster. The [2Fe-2S] cluster site is built by C60, C95, and C153.

It belongs to the radical SAM superfamily. Biotin synthase family. Homodimer. The cofactor is [4Fe-4S] cluster. [2Fe-2S] cluster serves as cofactor.

The catalysed reaction is (4R,5S)-dethiobiotin + (sulfur carrier)-SH + 2 reduced [2Fe-2S]-[ferredoxin] + 2 S-adenosyl-L-methionine = (sulfur carrier)-H + biotin + 2 5'-deoxyadenosine + 2 L-methionine + 2 oxidized [2Fe-2S]-[ferredoxin]. It participates in cofactor biosynthesis; biotin biosynthesis; biotin from 7,8-diaminononanoate: step 2/2. Functionally, catalyzes the conversion of dethiobiotin (DTB) to biotin by the insertion of a sulfur atom into dethiobiotin via a radical-based mechanism. This chain is Biotin synthase, found in Campylobacter lari (strain RM2100 / D67 / ATCC BAA-1060).